The primary structure comprises 317 residues: tRNA pseudouridine synthase B (317 aa).

Catalysis depends on aspartate 47, which acts as the Nucleophile.

Belongs to the pseudouridine synthase TruB family. Type 1 subfamily.

It catalyses the reaction uridine(55) in tRNA = pseudouridine(55) in tRNA. Functionally, responsible for synthesis of pseudouridine from uracil-55 in the psi GC loop of transfer RNAs. In Shewanella woodyi (strain ATCC 51908 / MS32), this protein is tRNA pseudouridine synthase B.